The following is a 274-amino-acid chain: Large ribosomal subunit protein uL2 (274 aa).

The disordered stretch occupies residues 223–258 (VAMNPVDHPHGGGEGRTSGGRHPVTPWGIPTKGYKT).

This sequence belongs to the universal ribosomal protein uL2 family. As to quaternary structure, part of the 50S ribosomal subunit. Forms a bridge to the 30S subunit in the 70S ribosome.

Its function is as follows. One of the primary rRNA binding proteins. Required for association of the 30S and 50S subunits to form the 70S ribosome, for tRNA binding and peptide bond formation. It has been suggested to have peptidyltransferase activity; this is somewhat controversial. Makes several contacts with the 16S rRNA in the 70S ribosome. The polypeptide is Large ribosomal subunit protein uL2 (Geotalea daltonii (strain DSM 22248 / JCM 15807 / FRC-32) (Geobacter daltonii)).